Here is a 178-residue protein sequence, read N- to C-terminus: Large ribosomal subunit protein uL6c (178 aa).

The protein belongs to the universal ribosomal protein uL6 family. As to quaternary structure, part of the 50S ribosomal subunit.

It localises to the plastid. The protein localises to the chloroplast. Binds 23S rRNA. In Phaeodactylum tricornutum (strain CCAP 1055/1), this protein is Large ribosomal subunit protein uL6c (rpl6).